The chain runs to 156 residues: MSRRNAAEKRPVLPDPQFNNRLATMMVARLMKHGKKSTAQRILSDAFGLINERTGSDPIELFETAVKNATPLVEVRARRVGGATYQVPMEVRQERGTAMALRWLVNFSRSRNGRSMAHKLAGELMDAANEAGNAVRKREETHKMAEANKAFAHYRY.

It belongs to the universal ribosomal protein uS7 family. As to quaternary structure, part of the 30S ribosomal subunit. Contacts proteins S9 and S11.

One of the primary rRNA binding proteins, it binds directly to 16S rRNA where it nucleates assembly of the head domain of the 30S subunit. Is located at the subunit interface close to the decoding center, probably blocks exit of the E-site tRNA. The protein is Small ribosomal subunit protein uS7 of Prochlorococcus marinus (strain MIT 9211).